Reading from the N-terminus, the 447-residue chain is Phosphoglucosamine mutase (447 aa).

The active-site Phosphoserine intermediate is Ser102. Residues Ser102, Asp241, Asp243, and Asp245 each coordinate Mg(2+). A Phosphoserine modification is found at Ser102.

Belongs to the phosphohexose mutase family. The cofactor is Mg(2+). Activated by phosphorylation.

It carries out the reaction alpha-D-glucosamine 1-phosphate = D-glucosamine 6-phosphate. In terms of biological role, catalyzes the conversion of glucosamine-6-phosphate to glucosamine-1-phosphate. The polypeptide is Phosphoglucosamine mutase (Pseudomonas syringae pv. tomato (strain ATCC BAA-871 / DC3000)).